The primary structure comprises 329 residues: Glycerol-3-phosphate dehydrogenase [NAD(P)+] (329 aa).

Positions 11 and 101 each coordinate NADPH. Residues Lys-101, Gly-132, and Ser-134 each contribute to the sn-glycerol 3-phosphate site. Ala-136 provides a ligand contact to NADPH. Sn-glycerol 3-phosphate-binding residues include Lys-188, Asp-241, Ser-251, Arg-252, and Asn-253. Lys-188 (proton acceptor) is an active-site residue. Arg-252 is a binding site for NADPH. Residues Val-276 and Glu-278 each contribute to the NADPH site.

The protein belongs to the NAD-dependent glycerol-3-phosphate dehydrogenase family.

The protein localises to the cytoplasm. The catalysed reaction is sn-glycerol 3-phosphate + NAD(+) = dihydroxyacetone phosphate + NADH + H(+). It catalyses the reaction sn-glycerol 3-phosphate + NADP(+) = dihydroxyacetone phosphate + NADPH + H(+). It participates in membrane lipid metabolism; glycerophospholipid metabolism. In terms of biological role, catalyzes the reduction of the glycolytic intermediate dihydroxyacetone phosphate (DHAP) to sn-glycerol 3-phosphate (G3P), the key precursor for phospholipid synthesis. The chain is Glycerol-3-phosphate dehydrogenase [NAD(P)+] from Phytoplasma australiense.